Consider the following 345-residue polypeptide: Selenide, water dikinase (345 aa).

The active site involves C16. ATP contacts are provided by residues K19 and 45-47; that span reads TSE. A Mg(2+)-binding site is contributed by D48. ATP contacts are provided by residues D65, D88, and 136–138; that span reads GHT. D88 is a Mg(2+) binding site. D224 contacts Mg(2+).

This sequence belongs to the selenophosphate synthase 1 family. Class I subfamily. As to quaternary structure, homodimer. The cofactor is Mg(2+).

The enzyme catalyses hydrogenselenide + ATP + H2O = selenophosphate + AMP + phosphate + 2 H(+). Functionally, synthesizes selenophosphate from selenide and ATP. This chain is Selenide, water dikinase, found in Aliarcobacter butzleri (strain RM4018) (Arcobacter butzleri).